The primary structure comprises 106 residues: Protein S40-3 (106 aa).

Residues 1 to 65 are disordered; it reads MSEEFQESEV…TEEEGEMTPP (65 aa). Residues 16–41 show a composition bias toward basic and acidic residues; the sequence is SFTRKDNKISHNNENYERKSTEKDKI.

This sequence belongs to the senescence regulator S40 family.

It is found in the nucleus. Its function is as follows. Regulates senescence either by modulating WRKY53 or by activating SAG12. Affects the natural variation of cyst nematodes sex ratio and susceptibility to parasitic nematodes, depending on single nucleotide polymorphism (SNPs) between cultivars. The chain is Protein S40-3 from Arabidopsis thaliana (Mouse-ear cress).